The chain runs to 436 residues: UDP-N-acetylmuramate--L-alanine ligase (436 aa).

110-116 (GAHGKTS) serves as a coordination point for ATP.

Belongs to the MurCDEF family.

It localises to the cytoplasm. The enzyme catalyses UDP-N-acetyl-alpha-D-muramate + L-alanine + ATP = UDP-N-acetyl-alpha-D-muramoyl-L-alanine + ADP + phosphate + H(+). Its pathway is cell wall biogenesis; peptidoglycan biosynthesis. Cell wall formation. This chain is UDP-N-acetylmuramate--L-alanine ligase, found in Lacticaseibacillus paracasei (strain ATCC 334 / BCRC 17002 / CCUG 31169 / CIP 107868 / KCTC 3260 / NRRL B-441) (Lactobacillus paracasei).